We begin with the raw amino-acid sequence, 260 residues long: Membrane protein insertase YidC 1 (260 aa).

The N-terminal stretch at 1 to 22 (MLKSYRAVLVSLSLLLVFVLSG) is a signal peptide. Cys23 is lipidated: N-palmitoyl cysteine. Residue Cys23 is the site of S-diacylglycerol cysteine attachment. The next 5 membrane-spanning stretches (helical) occupy residues 29-49 (IDAHSTGIWDHYFVYPISFMI), 52-72 (VAHHIPGASFGIAIIIMTLVI), 133-153 (LAGCWPLLIQMPIFSALYYAI), 164-184 (FLWVNLGHADPYHILPIIAAL), and 213-233 (MPAMILFMGFAAPSGLVLYWI).

The protein belongs to the OXA1/ALB3/YidC family. Type 2 subfamily.

The protein resides in the cell membrane. In terms of biological role, required for the insertion and/or proper folding and/or complex formation of integral membrane proteins into the membrane. Involved in integration of membrane proteins that insert both dependently and independently of the Sec translocase complex, as well as at least some lipoproteins. In Bacillus anthracis, this protein is Membrane protein insertase YidC 1.